The sequence spans 76 residues: Small proline-rich protein 4 (76 aa).

Residues 38–76 (PKTKDPCVPQAKKQCPARSTTNPAQEKCPAQQDPKCKQK) are disordered.

The protein belongs to the cornifin (SPRR) family. In terms of processing, cross-linked to membrane proteins by transglutaminase.

It is found in the cytoplasm. Its subcellular location is the cell cortex. Its function is as follows. Cross-linked envelope protein of keratinocytes. Involved in UV-induced cornification. The protein is Small proline-rich protein 4 (Sprr4) of Mus musculus (Mouse).